The chain runs to 559 residues: DnaJ homolog subfamily C member 11 (559 aa).

Alanine 2 carries the post-translational modification N-acetylalanine. Residues 14–82 (DYYSLLNVRR…QTRAIYDIYG (69 aa)) enclose the J domain. Serine 204 is subject to Phosphoserine. Positions 418 to 457 (KELEKQRESTATDILQKKQEAEAAVRLMQESVRRIIEAEE) form a coiled coil.

Belongs to the DNAJC11 family. Associates with the mitochondrial contact site and cristae organizing system (MICOS) complex, composed of at least MICOS10/MIC10, CHCHD3/MIC19, CHCHD6/MIC25, APOOL/MIC27, IMMT/MIC60, APOO/MIC23/MIC26 and QIL1/MIC13. This complex was also known under the names MINOS or MitOS complex. The MICOS complex associates with mitochondrial outer membrane proteins SAMM50, MTX1 and MTX2 (together described as components of the mitochondrial outer membrane sorting assembly machinery (SAM) complex) and DNAJC11, mitochondrial inner membrane protein TMEM11 and with HSPA9. The MICOS and SAM complexes together with DNAJC11 are part of a large protein complex spanning both membranes termed the mitochondrial intermembrane space bridging (MIB) complex.

The protein localises to the mitochondrion. The protein resides in the mitochondrion outer membrane. Functionally, required for mitochondrial inner membrane organization. Seems to function through its association with the MICOS complex and the mitochondrial outer membrane sorting assembly machinery (SAM) complex. This is DnaJ homolog subfamily C member 11 (DNAJC11) from Bos taurus (Bovine).